Consider the following 1050-residue polypeptide: Self-sufficient cytochrome P450 monooxygenase CYP505E3 (1050 aa).

Cys406 is a binding site for heme. A compositionally biased stretch (polar residues) spans 459–481; it reads RGQSATGLSQGSMSASGATSSVA. A disordered region spans residues 459 to 495; that stretch reads RGQSATGLSQGSMSASGATSSVASPGPPAATGAQSNP. One can recognise a Flavodoxin-like domain in the interval 501-641; sequence ISFFYGSNSG…DLELWEETNL (141 aa). Residues 507-511 and 585-617 each bind FMN; these read SNSGT and VFGCGHHDWAKTFYRIPILIDDLMHKAGATRLT. The FAD-binding FR-type domain maps to 679–907; sequence RGLVEAKVTA…RPAKDAFHLP (229 aa).

The protein in the N-terminal section; belongs to the cytochrome P450 family. It depends on FAD as a cofactor. FMN serves as cofactor. Heme is required as a cofactor.

The enzyme catalyses 2 oxidized [cytochrome P450] + NADPH = 2 reduced [cytochrome P450] + NADP(+) + H(+). It catalyses the reaction an organic molecule + reduced [NADPH--hemoprotein reductase] + O2 = an alcohol + oxidized [NADPH--hemoprotein reductase] + H2O + H(+). The catalysed reaction is decane + reduced [NADPH--hemoprotein reductase] + O2 = 3-decanol + oxidized [NADPH--hemoprotein reductase] + H2O + H(+). It carries out the reaction dodecane + reduced [NADPH--hemoprotein reductase] + O2 = 5-dodecanol + oxidized [NADPH--hemoprotein reductase] + H2O + H(+). The enzyme catalyses tetradecane + reduced [NADPH--hemoprotein reductase] + O2 = 7-tetradecanol + oxidized [NADPH--hemoprotein reductase] + H2O + H(+). It catalyses the reaction hexadecane + reduced [NADPH--hemoprotein reductase] + O2 = 9-hexadecanol + oxidized [NADPH--hemoprotein reductase] + H2O + H(+). The catalysed reaction is dodecanoate + reduced [NADPH--hemoprotein reductase] + O2 = 5-hydroxydodecanoate + oxidized [NADPH--hemoprotein reductase] + H2O + H(+). It carries out the reaction tetradecanoate + reduced [NADPH--hemoprotein reductase] + O2 = 7-hydroxytetradecanoate + oxidized [NADPH--hemoprotein reductase] + H2O + H(+). The enzyme catalyses hexadecanoate + reduced [NADPH--hemoprotein reductase] + O2 = 9-hydroxyhexadecanoate + oxidized [NADPH--hemoprotein reductase] + H2O + H(+). It catalyses the reaction decan-1-ol + reduced [NADPH--hemoprotein reductase] + O2 = 1,3-decanediol + oxidized [NADPH--hemoprotein reductase] + H2O + H(+). The catalysed reaction is decan-1-ol + reduced [NADPH--hemoprotein reductase] + O2 = 1,7-decanediol + oxidized [NADPH--hemoprotein reductase] + H2O + H(+). It carries out the reaction dodecan-1-ol + reduced [NADPH--hemoprotein reductase] + O2 = 1,5-dodecanediol + oxidized [NADPH--hemoprotein reductase] + H2O + H(+). The enzyme catalyses dodecan-1-ol + reduced [NADPH--hemoprotein reductase] + O2 = 1,4-dodecanediol + oxidized [NADPH--hemoprotein reductase] + H2O + H(+). It catalyses the reaction dodecan-1-ol + reduced [NADPH--hemoprotein reductase] + O2 = 1,6-dodecanediol + oxidized [NADPH--hemoprotein reductase] + H2O + H(+). Self-sufficient cytochrome P450 monooxygenase that catalyzes the regioselective in-chain hydroxylation of alkanes, fatty alcohols, and fatty acids at the omega-7 position. Performs hydroxylation of C10-C16 n-alkanes and C12 and C14 fatty alcohols; and thereby enables the one step biocatalytic synthesis of rare alcohols such as 5-dodecanol and 7-tetradecanol. Converts 1-dodecanol into 1,5-dodecanediol as major product with very little sub-terminally hydroxylated products with the 1,4-dodecanediol and 1,6-dodecanediol more abundant. Does not use hexadecanediol nor decanoic acid as substrates. Converts dodecanoic acid to 5-hydroxydodecanoic acid which can be further converted into delta-dodecalactone by lactonization of the 5-hydroxy acid at low pH. Also gives sub-terminal hydroxylation of dodecanoic acid with 9-hydroxydodecanoic acid being the second most abundant product. The C14 and C16 fatty acids are double hydroxylated to yield dihydroxy acids hydroxylated at both the omega-7 position and a sub-terminal position (omega-1, omega-2, or omega-3). This Aspergillus terreus (strain NIH 2624 / FGSC A1156) protein is Self-sufficient cytochrome P450 monooxygenase CYP505E3.